We begin with the raw amino-acid sequence, 123 residues long: Small ribosomal subunit protein uS12 (123 aa).

At D89 the chain carries 3-methylthioaspartic acid. The segment at 104–123 is disordered; sequence TAGVQDRRQGRSKYGAKRPK. The span at 113 to 123 shows a compositional bias: basic residues; it reads GRSKYGAKRPK.

This sequence belongs to the universal ribosomal protein uS12 family. Part of the 30S ribosomal subunit. Contacts proteins S8 and S17. May interact with IF1 in the 30S initiation complex.

Its function is as follows. With S4 and S5 plays an important role in translational accuracy. Interacts with and stabilizes bases of the 16S rRNA that are involved in tRNA selection in the A site and with the mRNA backbone. Located at the interface of the 30S and 50S subunits, it traverses the body of the 30S subunit contacting proteins on the other side and probably holding the rRNA structure together. The combined cluster of proteins S8, S12 and S17 appears to hold together the shoulder and platform of the 30S subunit. The chain is Small ribosomal subunit protein uS12 from Oleidesulfovibrio alaskensis (strain ATCC BAA-1058 / DSM 17464 / G20) (Desulfovibrio alaskensis).